Here is a 206-residue protein sequence, read N- to C-terminus: Large ribosomal subunit protein uL4 (206 aa).

The interval 63-85 (MYKQKGTGSARHGSARAPQFRGG) is disordered.

It belongs to the universal ribosomal protein uL4 family. In terms of assembly, part of the 50S ribosomal subunit.

One of the primary rRNA binding proteins, this protein initially binds near the 5'-end of the 23S rRNA. It is important during the early stages of 50S assembly. It makes multiple contacts with different domains of the 23S rRNA in the assembled 50S subunit and ribosome. Functionally, forms part of the polypeptide exit tunnel. The polypeptide is Large ribosomal subunit protein uL4 (Beijerinckia indica subsp. indica (strain ATCC 9039 / DSM 1715 / NCIMB 8712)).